The primary structure comprises 310 residues: Urease accessory protein UreD (310 aa).

The protein belongs to the UreD family. As to quaternary structure, ureD, UreF and UreG form a complex that acts as a GTP-hydrolysis-dependent molecular chaperone, activating the urease apoprotein by helping to assemble the nickel containing metallocenter of UreC. The UreE protein probably delivers the nickel.

The protein resides in the cytoplasm. Its function is as follows. Required for maturation of urease via the functional incorporation of the urease nickel metallocenter. The protein is Urease accessory protein UreD of Synechococcus sp. (strain RCC307).